A 618-amino-acid polypeptide reads, in one-letter code: Probable protein disulfide-isomerase A4 (618 aa).

Positions 1–21 (MMFDRRFFALVVLLCVSAVRS) are cleaved as a signal peptide. 3 Thioredoxin domains span residues 22–139 (TEDA…SRVD), 138–254 (VDPN…DQSK), and 480–609 (SSGK…KHGV). Intrachain disulfides connect C65/C68, C176/C179, and C529/C532. A Prevents secretion from ER motif is present at residues 615-618 (KDEL).

This sequence belongs to the protein disulfide isomerase family.

The protein localises to the endoplasmic reticulum lumen. The catalysed reaction is Catalyzes the rearrangement of -S-S- bonds in proteins.. The protein is Probable protein disulfide-isomerase A4 of Caenorhabditis elegans.